Consider the following 57-residue polypeptide: uncharacterized protein (57 aa).

Residues 34-51 traverse the membrane as a helical segment; sequence TALLDAAAVVVVPGLLAA.

Its subcellular location is the membrane. This is an uncharacterized protein from Dictyostelium discoideum (Social amoeba).